The sequence spans 120 residues: Large ribosomal subunit protein uL18 (120 aa).

The protein belongs to the universal ribosomal protein uL18 family. In terms of assembly, part of the 50S ribosomal subunit; part of the 5S rRNA/L5/L18/L25 subcomplex. Contacts the 5S and 23S rRNAs.

Functionally, this is one of the proteins that bind and probably mediate the attachment of the 5S RNA into the large ribosomal subunit, where it forms part of the central protuberance. The protein is Large ribosomal subunit protein uL18 of Sinorhizobium medicae (strain WSM419) (Ensifer medicae).